The chain runs to 1023 residues: NRPS-like oxidoreductase fscA (1023 aa).

The segment at 54–454 (TYGDLNGMAT…NHPFVRQCMV (401 aa)) is adenylation. The Carrier domain maps to 554 to 637 (PEDDVIGRQI…SIANHVRSAQ (84 aa)). Residue serine 596 is modified to O-(pantetheine 4'-phosphoryl)serine. The 217-residue stretch at 685-901 (LTGGAGYLGQ…VYDESTTRAR (217 aa)) folds into the Thioester reductase (TE) domain.

This sequence belongs to the NRP synthetase family. Pantetheine 4'-phosphate is required as a cofactor.

The protein operates within secondary metabolite biosynthesis. Its function is as follows. NRPS-like oxidoreductasee; part of the fragmented gene cluster that mediates the biosynthesis of fusarochromene, a tryptophan-derived metabolite closely related to a group of mycotoxins including fusarochromanone. Within the pathway, fscA acts as an oxidoreductase that reduces the carboxyl group of 4-hydroxykyrunenine to primary alcohol. The first step of the pathway is the epimerization of L-tryptophan to D-tryptophan in the presence of the NRPS-like tryptophan epimerase fscC. D-tryptophan is subsequently hydroxylated by the tryptophan 6-hydroxylase fscE to yield 6-hydroxytryptophan. The pyrrole ring undergoes cleavaged by the tryptophan 2,3-dioxygenase fscD and is finally converted to 4-hydroxykyrunenine by the hydrolase fscH. The NRPS-like oxidoreductase fscA reduces the carboxyl group to primary alcohol and the DMATS-type prenyltransferase fscG performs prenylation, followed by the formation of a chromene ring catalyzed by the oxidoreductase fscI, which leads to desacetylfusarochromene. Epoxidation by fscF and rearrangement reactions of chromene double bonds convert compound desacetylfusarochromene to fusarochromanones. Although specific acetyltransferases were not found near the fsc gene cluster, several predicted enzymes containing the N-acetyltransferase superfamily domain are present in the genome of F.equiseti. These predicted enzymes may have the potential to convert desacetylfusarochromene to fusarochromene. The polypeptide is NRPS-like oxidoreductase fscA (Fusarium equiseti (Fusarium scirpi)).